Reading from the N-terminus, the 324-residue chain is Acetyl-coenzyme A carboxylase carboxyl transferase subunit beta (324 aa).

Residues 1–16 (MTKNNNDLSNSSSNPP) show a composition bias toward low complexity. The segment at 1–51 (MTKNNNDLSNSSSNPPSNRPVAGKEAELEIQRETHAAQSGQSESWLSRPIP) is disordered. Over residues 22-35 (AGKEAELEIQRETH) the composition is skewed to basic and acidic residues. Over residues 36 to 45 (AAQSGQSESW) the composition is skewed to polar residues. A CoA carboxyltransferase N-terminal domain is found at 68–324 (PSTECPQCHS…YRLLAKLTHV (257 aa)). 4 residues coordinate Zn(2+): Cys-72, Cys-75, Cys-91, and Cys-94. The C4-type zinc-finger motif lies at 72–94 (CPQCHSMITNTALIFNAYVCPHC).

It belongs to the AccD/PCCB family. Acetyl-CoA carboxylase is a heterohexamer composed of biotin carboxyl carrier protein (AccB), biotin carboxylase (AccC) and two subunits each of ACCase subunit alpha (AccA) and ACCase subunit beta (AccD). It depends on Zn(2+) as a cofactor.

The protein resides in the cytoplasm. The enzyme catalyses N(6)-carboxybiotinyl-L-lysyl-[protein] + acetyl-CoA = N(6)-biotinyl-L-lysyl-[protein] + malonyl-CoA. It participates in lipid metabolism; malonyl-CoA biosynthesis; malonyl-CoA from acetyl-CoA: step 1/1. Functionally, component of the acetyl coenzyme A carboxylase (ACC) complex. Biotin carboxylase (BC) catalyzes the carboxylation of biotin on its carrier protein (BCCP) and then the CO(2) group is transferred by the transcarboxylase to acetyl-CoA to form malonyl-CoA. The sequence is that of Acetyl-coenzyme A carboxylase carboxyl transferase subunit beta from Psychrobacter sp. (strain PRwf-1).